The sequence spans 594 residues: Solute carrier family 22 member 14 (594 aa).

The Cytoplasmic portion of the chain corresponds to 1–70 (MAGEENFKEE…EFGTFQQRLV (70 aa)). A helical transmembrane segment spans residues 71-91 (ALTFIPSIMSAFFMFADHFVF). The Extracellular segment spans residues 92-184 (TAQKPYCNTS…LVCGMETKKD (93 aa)). Asparagine 99, asparagine 117, asparagine 125, and asparagine 150 each carry an N-linked (GlcNAc...) asparagine glycan. The chain crosses the membrane as a helical span at residues 185–205 (TAQIMFMAGLPIGSLIFRLIT). At 206 to 210 (DKMGR) the chain is on the cytoplasmic side. A helical transmembrane segment spans residues 211–231 (YPAILLSLLGLIIFGFGTAFM). Topologically, residues 232-235 (NSFH) are extracellular. A helical membrane pass occupies residues 236–256 (LYLFFRFGISQSVVGYAISSI). Topologically, residues 257-270 (SLATEWLVGEHRAH) are cytoplasmic. A helical transmembrane segment spans residues 271–291 (AIILGHCFFAVGAVLLTGIAY). Topologically, residues 292–297 (SLPHWQ) are extracellular. Residues 298-318 (LLFLVGGILVIPFISYIWILP) form a helical membrane-spanning segment. Residues 319–379 (ESPRWLMMKG…DFCKNRQLCK (61 aa)) lie on the Cytoplasmic side of the membrane. A helical membrane pass occupies residues 380 to 400 (VTLVMSCVWFTVSYTYFTLSL). Topologically, residues 401–408 (RMRELGVS) are extracellular. A helical membrane pass occupies residues 409 to 431 (VHFRHVVPSIMEVPARLCCIFLL). Residues 432–437 (QQIGRK) lie on the Cytoplasmic side of the membrane. The helical transmembrane segment at 438–458 (WSLAVTLLQAIIWCLLLLFLP) threads the bilayer. The Extracellular segment spans residues 459–488 (EGEDGLRLKWPRCPATELKSMTILVLMLRE). A helical membrane pass occupies residues 489-509 (FSLAATVTVFFLYTAELLPTV). Topologically, residues 510-512 (LRA) are cytoplasmic. A helical membrane pass occupies residues 513-533 (TGLGLVSLASVAGAILSLTII). At 534-538 (SQTPS) the chain is on the extracellular side. A helical transmembrane segment spans residues 539–559 (LLPIFLCCVLAIVAFSLSSLL). At 560-594 (PETRDQPLSESLNHSSQIRNKVKDMKTKETSSDDV) the chain is on the cytoplasmic side. The segment at 566–594 (PLSESLNHSSQIRNKVKDMKTKETSSDDV) is disordered. Over residues 567–578 (LSESLNHSSQIR) the composition is skewed to polar residues. The span at 580-594 (KVKDMKTKETSSDDV) shows a compositional bias: basic and acidic residues.

This sequence belongs to the major facilitator (TC 2.A.1) superfamily. Organic cation transporter (TC 2.A.1.19) family. In terms of tissue distribution, ubiquitous.

Its subcellular location is the mitochondrion inner membrane. The protein resides in the cell projection. It is found in the cilium. It localises to the flagellum membrane. It carries out the reaction riboflavin(in) = riboflavin(out). In terms of biological role, riboflavin transporter localized at the inner mitochondrial membrane of the spermatozoa midpiece, which is required for male fertility. SLC22A14-mediated riboflavin transport is essential for spermatozoa energy generation and motility: riboflavin is the precursor of FMN and FAD, which are coenzymes of many enzymes in the TCA cycle (the citric acid cycle) in mitochondria. Required for sperm motility and normal sperm flagellar structure. The polypeptide is Solute carrier family 22 member 14 (Homo sapiens (Human)).